The chain runs to 879 residues: Alanine--tRNA ligase (879 aa).

Zn(2+) contacts are provided by His-566, His-570, Cys-668, and His-672.

It belongs to the class-II aminoacyl-tRNA synthetase family. Requires Zn(2+) as cofactor.

The protein localises to the cytoplasm. The enzyme catalyses tRNA(Ala) + L-alanine + ATP = L-alanyl-tRNA(Ala) + AMP + diphosphate. Catalyzes the attachment of alanine to tRNA(Ala) in a two-step reaction: alanine is first activated by ATP to form Ala-AMP and then transferred to the acceptor end of tRNA(Ala). Also edits incorrectly charged Ser-tRNA(Ala) and Gly-tRNA(Ala) via its editing domain. This Clostridium perfringens (strain ATCC 13124 / DSM 756 / JCM 1290 / NCIMB 6125 / NCTC 8237 / Type A) protein is Alanine--tRNA ligase.